Reading from the N-terminus, the 101-residue chain is MQSISNCPIGLVSKNTINSASTIAEWVACPWKYINVVGSGRYVSNKPDKITRYDLLKAAQEAEMQELLTRNDMKGRHKRNKKSKIALETIAEENSSTESLF.

The protein localises to the mitochondrion. In terms of biological role, mitochondrial protein that is involved in citrinin resistance. This Saccharomyces cerevisiae (strain ATCC 204508 / S288c) (Baker's yeast) protein is Citrinin resistance protein, mitochondrial.